We begin with the raw amino-acid sequence, 298 residues long: Multifunctional dioxygenase ausE (298 aa).

Residues arginine 72 and glutamine 127 each contribute to the substrate site. Histidine 130 and aspartate 132 together coordinate Fe cation. Substrate is bound at residue threonine 167. Residue histidine 214 participates in Fe cation binding. Arginine 226 lines the substrate pocket.

This sequence belongs to the PhyH family. Homodimer. Requires Fe cation as cofactor.

It carries out the reaction preaustinoid A1 + 2-oxoglutarate + O2 = preaustinoid A2 + succinate + CO2 + H2O. It catalyses the reaction preaustinoid A2 + 2-oxoglutarate + O2 = preaustinoid A3 + succinate + CO2 + H2O. The catalysed reaction is berkeleyone A + 2-oxoglutarate + O2 = preaustinoid A + succinate + CO2 + H2O. It functions in the pathway secondary metabolite biosynthesis; terpenoid biosynthesis. In terms of biological role, multifunctional dioxygenase; part of the gene cluster B that mediates the biosynthesis of austinol and dehydroaustinol, two fungal meroterpenoids. The first step of the pathway is the synthesis of 3,5-dimethylorsellinic acid by the polyketide synthase ausA. 3,5-dimethylorsellinic acid is then prenylated by the polyprenyl transferase ausN. Further epoxidation by the FAD-dependent monooxygenase ausM and cyclization by the probable terpene cyclase ausL lead to the formation of protoaustinoid A. Protoaustinoid A is then oxidized to spiro-lactone preaustinoid A3 by the combined action of the FAD-binding monooxygenases ausB and ausC, and the dioxygenase ausE. Acid-catalyzed keto-rearrangement and ring contraction of the tetraketide portion of preaustinoid A3 by ausJ lead to the formation of preaustinoid A4. The aldo-keto reductase ausK, with the help of ausH, is involved in the next step by transforming preaustinoid A4 into isoaustinone which is in turn hydroxylated by the P450 monooxygenase ausI to form austinolide. Finally, the cytochrome P450 monooxygenase ausG modifies austinolide to austinol. Austinol can be further modified to dehydroaustinol which forms a diffusible complex with diorcinol that initiates conidiation. Due to genetic rearrangements of the clusters and the subsequent loss of some enzymes, the end products of the Emericella nidulans austinoid biosynthesis clusters are austinol and dehydroaustinol, even if additional enzymes, such as the O-acetyltransferase ausQ and the cytochrome P450 monooxygenase ausR are still functional. The sequence is that of Multifunctional dioxygenase ausE from Emericella nidulans (strain FGSC A4 / ATCC 38163 / CBS 112.46 / NRRL 194 / M139) (Aspergillus nidulans).